The primary structure comprises 423 residues: Serine--tRNA ligase (423 aa).

T231–E233 lines the L-serine pocket. ATP is bound at residue R262–E264. E285 contacts L-serine. E349–S352 is an ATP binding site. Residue S384 participates in L-serine binding.

Belongs to the class-II aminoacyl-tRNA synthetase family. Type-1 seryl-tRNA synthetase subfamily. Homodimer. The tRNA molecule binds across the dimer.

Its subcellular location is the cytoplasm. The catalysed reaction is tRNA(Ser) + L-serine + ATP = L-seryl-tRNA(Ser) + AMP + diphosphate + H(+). It carries out the reaction tRNA(Sec) + L-serine + ATP = L-seryl-tRNA(Sec) + AMP + diphosphate + H(+). The protein operates within aminoacyl-tRNA biosynthesis; selenocysteinyl-tRNA(Sec) biosynthesis; L-seryl-tRNA(Sec) from L-serine and tRNA(Sec): step 1/1. Functionally, catalyzes the attachment of serine to tRNA(Ser). Is also able to aminoacylate tRNA(Sec) with serine, to form the misacylated tRNA L-seryl-tRNA(Sec), which will be further converted into selenocysteinyl-tRNA(Sec). This chain is Serine--tRNA ligase, found in Lactococcus lactis subsp. cremoris (strain MG1363).